Reading from the N-terminus, the 310-residue chain is Putative RING-H2 finger protein ATL53 (310 aa).

The helical transmembrane segment at 62-82 threads the bilayer; the sequence is VIAIFGIFATAFLLAAYYTLV. An RING-type; atypical zinc finger spans residues 155 to 197; it reads CSICLGEFNEDESLRLLPKCNHTFHVVCIDRWLKSHSNCPLCR.

Belongs to the RING-type zinc finger family. ATL subfamily.

The protein resides in the membrane. It catalyses the reaction S-ubiquitinyl-[E2 ubiquitin-conjugating enzyme]-L-cysteine + [acceptor protein]-L-lysine = [E2 ubiquitin-conjugating enzyme]-L-cysteine + N(6)-ubiquitinyl-[acceptor protein]-L-lysine.. Its pathway is protein modification; protein ubiquitination. The polypeptide is Putative RING-H2 finger protein ATL53 (ATL53) (Arabidopsis thaliana (Mouse-ear cress)).